The chain runs to 816 residues: Phosphatidylinositol 4-kinase beta (816 aa).

3 disordered regions span residues 1-28 (MGDTVVAPAPLKPASESTPGPPGNNGGS), 93-120 (PPTGIREEDDETEATVASGTAKGARRRR), and 249-318 (HRKR…SFSS). Gly2 carries the N-acetylglycine modification. An interaction with ACBD3 region spans residues 2–68 (GDTVVAPAPL…VKLSHGGVAS (67 aa)). The PIK helical domain maps to 49-242 (QKACQEVLQK…GTKLRRLILS (194 aa)). Ser258 is subject to Phosphoserine. Residue Thr263 is modified to Phosphothreonine. Phosphoserine is present on residues Ser266, Ser275, Ser277, Ser284, Ser294, Ser428, and Ser511. The span at 278–294 (DATASISLSSSLKRTAS) shows a compositional bias: low complexity. 2 positions are modified to phosphothreonine: Thr517 and Thr519. The region spanning 535-801 (EPWQEKVRRI…MVDGSMRSIT (267 aa)) is the PI3K/PI4K catalytic domain. Positions 541-547 (VRRIREG) are G-loop. The interval 668 to 676 (QVKDRHNGN) is catalytic loop. The activation loop stretch occupies residues 687 to 711 (HIDFGFILSSSPRNLGFETSAFKLT).

It belongs to the PI3/PI4-kinase family. Type III PI4K subfamily. In terms of assembly, interacts with ARF1 and ARF3 in the Golgi complex, but not with ARF4, ARF5 or ARF6. Interacts with NCS1/FREQ in a calcium-independent manner. Interacts with CALN1/CABP8 and CALN2/CABP7; in a calcium-dependent manner; this interaction competes with NCS1/FREQ binding. Interacts with ACBD3. Interacts with ARMH3, YWHAB, YWHAE, YWHAG, YWHAH, YWHAQ, YWHAZ and SFN. Interacts with GGA2 (via VHS domain); the interaction is important for PI4KB location at the Golgi apparatus membrane. Interacts with ATG9A. Requires Mg(2+) as cofactor. Mn(2+) is required as a cofactor.

Its subcellular location is the endomembrane system. The protein resides in the mitochondrion outer membrane. The protein localises to the rough endoplasmic reticulum membrane. It is found in the golgi apparatus. It localises to the golgi apparatus membrane. It carries out the reaction a 1,2-diacyl-sn-glycero-3-phospho-(1D-myo-inositol) + ATP = a 1,2-diacyl-sn-glycero-3-phospho-(1D-myo-inositol 4-phosphate) + ADP + H(+). Inhibited by wortmannin. Increased kinase activity upon interaction with NCS1/FREQ. Functionally, phosphorylates phosphatidylinositol (PI) in the first committed step in the production of the second messenger inositol-1,4,5,-trisphosphate (PIP). May regulate Golgi disintegration/reorganization during mitosis, possibly via its phosphorylation. Involved in Golgi-to-plasma membrane trafficking. May play an important role in the inner ear development. This chain is Phosphatidylinositol 4-kinase beta (PI4KB), found in Rhinolophus ferrumequinum (Greater horseshoe bat).